The sequence spans 278 residues: Octanoyl-[GcvH]:protein N-octanoyltransferase (278 aa).

The region spanning 44-249 (SQSPPTLRAW…TLQQHGASLL (206 aa)) is the BPL/LPL catalytic domain. The active-site Acyl-thioester intermediate is the Cys-148.

Belongs to the octanoyltransferase LipL family.

The enzyme catalyses N(6)-octanoyl-L-lysyl-[glycine-cleavage complex H protein] + L-lysyl-[lipoyl-carrier protein] = N(6)-octanoyl-L-lysyl-[lipoyl-carrier protein] + L-lysyl-[glycine-cleavage complex H protein]. It functions in the pathway protein modification; protein lipoylation via endogenous pathway; protein N(6)-(lipoyl)lysine from octanoyl-[acyl-carrier-protein]. Its function is as follows. Catalyzes the amidotransfer (transamidation) of the octanoyl moiety from octanoyl-GcvH to the lipoyl domain of the E2 subunit of lipoate-dependent enzymes. The chain is Octanoyl-[GcvH]:protein N-octanoyltransferase from Halalkalibacterium halodurans (strain ATCC BAA-125 / DSM 18197 / FERM 7344 / JCM 9153 / C-125) (Bacillus halodurans).